The chain runs to 717 residues: CRISPR-associated protein Cas8b (717 aa).

Disordered stretches follow at residues 263 to 283 (IGVF…DQSW) and 698 to 717 (HEKE…STTN). The span at 701–717 (EDEDDQDTEEPAESTTN) shows a compositional bias: acidic residues.

The protein resides in the cytoplasm. In terms of biological role, CRISPR (clustered regularly interspaced short palindromic repeat) is an adaptive immune system that provides protection against mobile genetic elements (viruses, transposable elements and conjugative plasmids). CRISPR clusters contain sequences complementary to antecedent mobile elements and target invading nucleic acids. CRISPR clusters are transcribed and processed into CRISPR RNA (crRNA). Plasmid targeted by CRISPR locus P1 transform wild-type cells very poorly. This subunit might be involved in stabilizing crRNA. The protein is CRISPR-associated protein Cas8b of Haloferax volcanii (strain ATCC 29605 / DSM 3757 / JCM 8879 / NBRC 14742 / NCIMB 2012 / VKM B-1768 / DS2) (Halobacterium volcanii).